The following is a 125-amino-acid chain: Large ribosomal subunit protein bL12 (125 aa).

Residues proline 96 to lysine 125 are disordered. A compositionally biased stretch (basic and acidic residues) spans glycine 102–glutamate 117.

This sequence belongs to the bacterial ribosomal protein bL12 family. As to quaternary structure, homodimer. Part of the ribosomal stalk of the 50S ribosomal subunit. Forms a multimeric L10(L12)X complex, where L10 forms an elongated spine to which 2 to 4 L12 dimers bind in a sequential fashion. Binds GTP-bound translation factors.

Functionally, forms part of the ribosomal stalk which helps the ribosome interact with GTP-bound translation factors. Is thus essential for accurate translation. The polypeptide is Large ribosomal subunit protein bL12 (Alcanivorax borkumensis (strain ATCC 700651 / DSM 11573 / NCIMB 13689 / SK2)).